The following is a 358-amino-acid chain: 4-hydroxy-3-methylbut-2-en-1-yl diphosphate synthase (flavodoxin) (358 aa).

[4Fe-4S] cluster is bound by residues Cys270, Cys273, Cys305, and Glu312.

It belongs to the IspG family. Requires [4Fe-4S] cluster as cofactor.

It carries out the reaction (2E)-4-hydroxy-3-methylbut-2-enyl diphosphate + oxidized [flavodoxin] + H2O + 2 H(+) = 2-C-methyl-D-erythritol 2,4-cyclic diphosphate + reduced [flavodoxin]. The protein operates within isoprenoid biosynthesis; isopentenyl diphosphate biosynthesis via DXP pathway; isopentenyl diphosphate from 1-deoxy-D-xylulose 5-phosphate: step 5/6. In terms of biological role, converts 2C-methyl-D-erythritol 2,4-cyclodiphosphate (ME-2,4cPP) into 1-hydroxy-2-methyl-2-(E)-butenyl 4-diphosphate. This chain is 4-hydroxy-3-methylbut-2-en-1-yl diphosphate synthase (flavodoxin), found in Vesicomyosocius okutanii subsp. Calyptogena okutanii (strain HA).